The following is a 952-amino-acid chain: Isoleucine--tRNA ligase (952 aa).

The short motif at 60–70 (PYANGSLHIGH) is the 'HIGH' region element. E562 is a binding site for L-isoleucyl-5'-AMP. Positions 603-607 (KMSKS) match the 'KMSKS' region motif. ATP is bound at residue K606. Zn(2+) is bound by residues C921, C924, C941, and C944.

This sequence belongs to the class-I aminoacyl-tRNA synthetase family. IleS type 1 subfamily. In terms of assembly, monomer. It depends on Zn(2+) as a cofactor.

Its subcellular location is the cytoplasm. It carries out the reaction tRNA(Ile) + L-isoleucine + ATP = L-isoleucyl-tRNA(Ile) + AMP + diphosphate. Catalyzes the attachment of isoleucine to tRNA(Ile). As IleRS can inadvertently accommodate and process structurally similar amino acids such as valine, to avoid such errors it has two additional distinct tRNA(Ile)-dependent editing activities. One activity is designated as 'pretransfer' editing and involves the hydrolysis of activated Val-AMP. The other activity is designated 'posttransfer' editing and involves deacylation of mischarged Val-tRNA(Ile). This Microcystis aeruginosa (strain NIES-843 / IAM M-2473) protein is Isoleucine--tRNA ligase.